A 436-amino-acid chain; its full sequence is 2-aminohexano-6-lactam racemase (436 aa).

Pyridoxal 5'-phosphate is bound by residues 110–111, tyrosine 137, and 238–241; these read GS and DEVK. Residue tyrosine 137 is part of the active site. N6-(pyridoxal phosphate)lysine is present on lysine 267. Threonine 295 is a binding site for pyridoxal 5'-phosphate.

This sequence belongs to the class-III pyridoxal-phosphate-dependent aminotransferase family. Monomer. The cofactor is pyridoxal 5'-phosphate.

The catalysed reaction is L-2-aminohexano-6-lactam = D-2-aminohexano-6-lactam. In terms of biological role, catalyzes the interconversion of L-alpha-amino-epsilon-caprolactam and D-alpha-amino-epsilon-caprolactam. In Achromobacter obae, this protein is 2-aminohexano-6-lactam racemase.